The chain runs to 414 residues: CCA-adding enzyme (414 aa).

ATP is bound by residues Gly-8 and Arg-11. CTP-binding residues include Gly-8 and Arg-11. Mg(2+) contacts are provided by Asp-21 and Asp-23. Residues Arg-91, Arg-137, and Arg-140 each coordinate ATP. Residues Arg-91, Arg-137, and Arg-140 each coordinate CTP.

Belongs to the tRNA nucleotidyltransferase/poly(A) polymerase family. Bacterial CCA-adding enzyme type 2 subfamily. It depends on Mg(2+) as a cofactor.

The enzyme catalyses a tRNA precursor + 2 CTP + ATP = a tRNA with a 3' CCA end + 3 diphosphate. The catalysed reaction is a tRNA with a 3' CCA end + 2 CTP + ATP = a tRNA with a 3' CCACCA end + 3 diphosphate. Functionally, catalyzes the addition and repair of the essential 3'-terminal CCA sequence in tRNAs without using a nucleic acid template. Adds these three nucleotides in the order of C, C, and A to the tRNA nucleotide-73, using CTP and ATP as substrates and producing inorganic pyrophosphate. tRNA 3'-terminal CCA addition is required both for tRNA processing and repair. Also involved in tRNA surveillance by mediating tandem CCA addition to generate a CCACCA at the 3' terminus of unstable tRNAs. While stable tRNAs receive only 3'-terminal CCA, unstable tRNAs are marked with CCACCA and rapidly degraded. This is CCA-adding enzyme from Buchnera aphidicola subsp. Acyrthosiphon pisum (strain Tuc7).